The primary structure comprises 128 residues: Ribosome-binding factor A (128 aa).

This sequence belongs to the RbfA family. As to quaternary structure, monomer. Binds 30S ribosomal subunits, but not 50S ribosomal subunits or 70S ribosomes.

It is found in the cytoplasm. Functionally, one of several proteins that assist in the late maturation steps of the functional core of the 30S ribosomal subunit. Associates with free 30S ribosomal subunits (but not with 30S subunits that are part of 70S ribosomes or polysomes). Required for efficient processing of 16S rRNA. May interact with the 5'-terminal helix region of 16S rRNA. The sequence is that of Ribosome-binding factor A from Saccharophagus degradans (strain 2-40 / ATCC 43961 / DSM 17024).